The following is a 212-amino-acid chain: External core antigen (212 aa).

Positions 1-19 (MQLFHLCLIISCSCPTVQA) are cleaved as a signal peptide. An HBEAG region spans residues 25 to 27 (GWL). The disordered stretch occupies residues 165 to 212 (NAPILSTLPETTVVRRRGRSPRRRTPSPRRRRSQSPRRRRSQSRESQC). The segment covering 178–205 (VRRRGRSPRRRTPSPRRRRSQSPRRRRS) has biased composition (basic residues). The 1; half-length repeat unit spans residues 184 to 190 (SPRRRTP). Positions 184–206 (SPRRRTPSPRRRRSQSPRRRRSQ) are 3 X 8 AA repeats of S-P-R-R-R-R-S-Q. Positions 184-212 (SPRRRTPSPRRRRSQSPRRRRSQSRESQC) are excised as a propeptide. 2 consecutive repeat copies span residues 191 to 198 (SPRRRRSQ) and 199 to 206 (SPRRRRSQ).

The protein belongs to the orthohepadnavirus precore antigen family. As to quaternary structure, homodimerizes. Post-translationally, phosphorylated. Cleaved by host furin.

It localises to the secreted. The protein localises to the host nucleus. Functionally, may regulate immune response to the intracellular capsid in acting as a T-cell tolerogen, by having an immunoregulatory effect which prevents destruction of infected cells by cytotoxic T-cells. This immune regulation may predispose to chronicity during perinatal infections and prevent severe liver injury during adult infections. In Homo sapiens (Human), this protein is External core antigen.